We begin with the raw amino-acid sequence, 186 residues long: Mediator of RNA polymerase II transcription subunit 10a (186 aa).

Belongs to the Mediator complex subunit 10 family. As to quaternary structure, mono-, di- and oligomers. Component of the Mediator complex. Interacts with GEBPL.

It is found in the nucleus. Its function is as follows. Component of the Mediator complex, a coactivator involved in the regulated transcription of nearly all RNA polymerase II-dependent genes. Mediator functions as a bridge to convey information from gene-specific regulatory proteins to the basal RNA polymerase II transcription machinery. The Mediator complex, having a compact conformation in its free form, is recruited to promoters by direct interactions with regulatory proteins and serves for the assembly of a functional pre-initiation complex with RNA polymerase II and the general transcription factors. The sequence is that of Mediator of RNA polymerase II transcription subunit 10a from Arabidopsis thaliana (Mouse-ear cress).